We begin with the raw amino-acid sequence, 270 residues long: NFAT activation molecule 1 (270 aa).

Residues 1–42 (MENQPVRWRALPGLPRPPGLPAAPWLLLGVLLLPGTLRLAGG) form the signal peptide. At 43–163 (QSVTHTGLPI…YREPPQSPQK (121 aa)) the chain is on the extracellular side. The Ig-like V-type domain maps to 50–150 (LPIMASLANT…RGSGTFILVR (101 aa)). Residues Cys-65 and Cys-114 are joined by a disulfide bond. N-linked (GlcNAc...) asparagine glycosylation occurs at Asn-107. A helical transmembrane segment spans residues 164 to 184 (LLLFGFTGLLSVLSVVGTALL). The Cytoplasmic portion of the chain corresponds to 185 to 270 (LWNKKRMRGP…GELNLVYENL (86 aa)). The segment at 190 to 219 (RMRGPGKDPTRKCPDPRSASSPKQHPSESV) is disordered. The segment covering 194–204 (PGKDPTRKCPD) has biased composition (basic and acidic residues). Polar residues predominate over residues 207 to 219 (SASSPKQHPSESV). Residues 209-237 (SSPKQHPSESVYTALQRRETEVYACIENE) enclose the ITAM domain. 2 positions are modified to phosphotyrosine: Tyr-220 and Tyr-231. The tract at residues 234-262 (IENEDGSSPTAKQSPLSQERPHRFEDDGE) is disordered. The span at 239 to 250 (GSSPTAKQSPLS) shows a compositional bias: polar residues.

As to quaternary structure, no direct interaction with the B-cell antigen receptor (BCR). Interacts with SYK; probably involved in BCR signaling. Interacts with ZAP70. Post-translationally, N-glycosylated. In terms of tissue distribution, highly expressed in neutrophils, primary monocytes, mast cells, monocytic cell lines and lymphocytes. Also expressed in spleen B and T-cells, and lung. Expressed at low level in non-immune tissue.

It localises to the cell membrane. Its function is as follows. May function in immune system as a receptor which activates via the calcineurin/NFAT-signaling pathway the downstream cytokine gene promoters. Activates the transcription of IL-13 and TNF-alpha promoters. May be involved in the regulation of B-cell, but not T-cell, development. Overexpression activates downstream effectors without ligand binding or antibody cross-linking. In Homo sapiens (Human), this protein is NFAT activation molecule 1 (NFAM1).